Here is a 232-residue protein sequence, read N- to C-terminus: Chalcone--flavanone isomerase (232 aa).

Thr-50 and Ser-192 together coordinate substrate.

This sequence belongs to the chalcone isomerase family.

The catalysed reaction is a chalcone = a flavanone.. Its pathway is secondary metabolite biosynthesis; flavonoid biosynthesis. Its function is as follows. Catalyzes the intramolecular cyclization of bicyclic chalcones into tricyclic (S)-flavanones. Responsible for the isomerization of 4,2',4',6'-tetrahydroxychalcone (also termed chalcone) into naringenin. This Saussurea medusa (Saw-wort) protein is Chalcone--flavanone isomerase (CHI).